The chain runs to 261 residues: Thioesterase TesA (261 aa).

Active-site residues include S104, D208, and H236.

It belongs to the thioesterase family.

It carries out the reaction a fatty acyl-CoA + H2O = a fatty acid + CoA + H(+). In terms of biological role, involved in the synthesis of both phthiocerol dimycocerosates (PDIMs) and phenolic glycolipids (PGLs), which are structurally related lipids non-covalently bound to the outer cell wall layer of M.tuberculosis and are important virulence factors. This Mycobacterium leprae (strain TN) protein is Thioesterase TesA (tesA).